Here is a 150-residue protein sequence, read N- to C-terminus: UPF0506 protein SJCHGC09643 (150 aa).

The signal sequence occupies residues 1 to 18 (MNTCIQLLILCLVTVINS). Asn20, Asn32, Asn48, and Asn110 each carry an N-linked (GlcNAc...) asparagine glycan. 3 disulfides stabilise this stretch: Cys116–Cys130, Cys123–Cys134, and Cys129–Cys139.

The protein belongs to the UPF0506 family.

It is found in the secreted. This Schistosoma japonicum (Blood fluke) protein is UPF0506 protein SJCHGC09643.